The sequence spans 103 residues: Large ribosomal subunit protein bL21 (103 aa).

Belongs to the bacterial ribosomal protein bL21 family. Part of the 50S ribosomal subunit. Contacts protein L20.

In terms of biological role, this protein binds to 23S rRNA in the presence of protein L20. The chain is Large ribosomal subunit protein bL21 from Shewanella baltica (strain OS223).